Consider the following 556-residue polypeptide: 2-succinyl-5-enolpyruvyl-6-hydroxy-3-cyclohexene-1-carboxylate synthase (556 aa).

The protein belongs to the TPP enzyme family. MenD subfamily. Homodimer. The cofactor is Mg(2+). Mn(2+) is required as a cofactor. Requires thiamine diphosphate as cofactor.

It carries out the reaction isochorismate + 2-oxoglutarate + H(+) = 5-enolpyruvoyl-6-hydroxy-2-succinyl-cyclohex-3-ene-1-carboxylate + CO2. Its pathway is quinol/quinone metabolism; 1,4-dihydroxy-2-naphthoate biosynthesis; 1,4-dihydroxy-2-naphthoate from chorismate: step 2/7. It functions in the pathway quinol/quinone metabolism; menaquinone biosynthesis. Functionally, catalyzes the thiamine diphosphate-dependent decarboxylation of 2-oxoglutarate and the subsequent addition of the resulting succinic semialdehyde-thiamine pyrophosphate anion to isochorismate to yield 2-succinyl-5-enolpyruvyl-6-hydroxy-3-cyclohexene-1-carboxylate (SEPHCHC). This is 2-succinyl-5-enolpyruvyl-6-hydroxy-3-cyclohexene-1-carboxylate synthase from Citrobacter koseri (strain ATCC BAA-895 / CDC 4225-83 / SGSC4696).